The primary structure comprises 476 residues: ATP synthase subunit beta (476 aa).

154–161 (GGAGVGKT) provides a ligand contact to ATP.

This sequence belongs to the ATPase alpha/beta chains family. F-type ATPases have 2 components, CF(1) - the catalytic core - and CF(0) - the membrane proton channel. CF(1) has five subunits: alpha(3), beta(3), gamma(1), delta(1), epsilon(1). CF(0) has four main subunits: a(1), b(1), b'(1) and c(9-12).

It is found in the cell inner membrane. The enzyme catalyses ATP + H2O + 4 H(+)(in) = ADP + phosphate + 5 H(+)(out). Its function is as follows. Produces ATP from ADP in the presence of a proton gradient across the membrane. The catalytic sites are hosted primarily by the beta subunits. The protein is ATP synthase subunit beta of Rhodopseudomonas palustris (strain BisB5).